Here is a 148-residue protein sequence, read N- to C-terminus: Probable TtuB-protein conjugate cleaving protease (148 aa).

An MPN domain is found at 22-148; it reads HGLVLYVPRG…EGQEVALVVL (127 aa). The active-site Proton donor/acceptor is Glu47. Zn(2+)-binding residues include His101, His103, and Asp114. A JAMM motif motif is present at residues 101 to 114; that stretch reads HSHPKGPALPSPRD.

The protein belongs to the peptidase M67B family. Zn(2+) serves as cofactor.

Functionally, probable metalloprotease that cleaves the ubiquitin-like modifier protein TtuB from protein conjugates, hydrolyzing the isopeptide bond between a lysine residue of the target protein and the C-terminal glycine of the modifier protein. Does not seem to work for all the TtuB conjugates. In Thermus thermophilus (strain ATCC BAA-163 / DSM 7039 / HB27), this protein is Probable TtuB-protein conjugate cleaving protease.